The chain runs to 393 residues: MTRIGTPLSPSATRVLLCGSGELGKEVAIELQRLGCEVIAVDRYGNAPAMQVAHRSHVISMLDGAALRAVIEQEKPHYIVPEIEAIATATLVELEAEGYTVVPTARAAQLTMNREGIRRLAAEELGLPTSPYHFADTFEDYRRGVERVGYPCVVKPIMSSSGKGQSVLKGPDDLQAAWDYAQEGGRAGKGRVIVEGFIDFDYEITLLTVRHVDGTTFCAPIGHRQVKGDYHESWQPQAMSAQALAESERVARAVTEALGGRGLFGVELFVKGDQVWFSEVSPRPHDTGLVTLISQDLSEFALHARAILGLPIPVIRQLGPSASAVILVEGKSRQVAFANLGAALSEADTALRLFGKPEVDGQRRMGVALARDESIDAARAKATRAAQAVRVEL.

Residues 22 to 23 (EL) and Glu82 each bind N(1)-(5-phospho-beta-D-ribosyl)glycinamide. ATP is bound by residues Arg114, Lys155, 160–165 (SSGKGQ), 195–198 (EGFI), and Glu203. The 190-residue stretch at 119-308 (RLAAEELGLP…EFALHARAIL (190 aa)) folds into the ATP-grasp domain. Residues Glu267 and Glu279 each contribute to the Mg(2+) site. N(1)-(5-phospho-beta-D-ribosyl)glycinamide contacts are provided by residues Asp286, Lys356, and 363 to 364 (RR).

Belongs to the PurK/PurT family. As to quaternary structure, homodimer.

The enzyme catalyses N(1)-(5-phospho-beta-D-ribosyl)glycinamide + formate + ATP = N(2)-formyl-N(1)-(5-phospho-beta-D-ribosyl)glycinamide + ADP + phosphate + H(+). The protein operates within purine metabolism; IMP biosynthesis via de novo pathway; N(2)-formyl-N(1)-(5-phospho-D-ribosyl)glycinamide from N(1)-(5-phospho-D-ribosyl)glycinamide (formate route): step 1/1. In terms of biological role, involved in the de novo purine biosynthesis. Catalyzes the transfer of formate to 5-phospho-ribosyl-glycinamide (GAR), producing 5-phospho-ribosyl-N-formylglycinamide (FGAR). Formate is provided by PurU via hydrolysis of 10-formyl-tetrahydrofolate. This is Formate-dependent phosphoribosylglycinamide formyltransferase from Pseudomonas aeruginosa (strain LESB58).